The following is a 351-amino-acid chain: Dihydroorotate dehydrogenase (quinone) (351 aa).

Residues 61–65 (AGLDK) and Thr-85 each bind FMN. Substrate is bound at residue Lys-65. 110–114 (NRMGF) provides a ligand contact to substrate. Asn-139 and Asn-172 together coordinate FMN. Position 172 (Asn-172) interacts with substrate. The active-site Nucleophile is Ser-175. Asn-177 contributes to the substrate binding site. Positions 217 and 245 each coordinate FMN. Position 246-247 (246-247 (NT)) interacts with substrate. Residues Gly-268, Gly-297, and 318-319 (YT) contribute to the FMN site.

It belongs to the dihydroorotate dehydrogenase family. Type 2 subfamily. In terms of assembly, monomer. FMN is required as a cofactor.

Its subcellular location is the cell membrane. It carries out the reaction (S)-dihydroorotate + a quinone = orotate + a quinol. It functions in the pathway pyrimidine metabolism; UMP biosynthesis via de novo pathway; orotate from (S)-dihydroorotate (quinone route): step 1/1. Its function is as follows. Catalyzes the conversion of dihydroorotate to orotate with quinone as electron acceptor. The protein is Dihydroorotate dehydrogenase (quinone) of Xylella fastidiosa (strain 9a5c).